We begin with the raw amino-acid sequence, 394 residues long: DNA replication and repair protein RecF (394 aa).

30-37 (GSNGQGKT) is an ATP binding site.

This sequence belongs to the RecF family.

The protein localises to the cytoplasm. Its function is as follows. The RecF protein is involved in DNA metabolism; it is required for DNA replication and normal SOS inducibility. RecF binds preferentially to single-stranded, linear DNA. It also seems to bind ATP. The chain is DNA replication and repair protein RecF from Cutibacterium acnes (strain DSM 16379 / KPA171202) (Propionibacterium acnes).